The sequence spans 1755 residues: BCL-6 corepressor (1755 aa).

Residues 309–345 (NSKQPRVPSAKAVTSGLPGDTALLLPPSPRPSPRVHL) form a disordered region. Ser-336, Ser-340, Ser-365, and Ser-367 each carry phosphoserine. Residues 388-438 (LSNGKYPKAPEGGEGAQPVPGHARKTAVQDRKDGSSPPLLEKQTVTKDVTD) are disordered. Lys-392 is modified (N6-acetyllysine). Ser-423 carries the post-translational modification Phosphoserine. The tract at residues 498-514 (RSEIISTAPSSWVVPGP) is interaction with BCL6. Residues 557–578 (VSGSVSSAGRPASASPAPNANA) are compositionally biased toward low complexity. 4 disordered regions span residues 557-641 (VSGS…IFLS), 737-760 (ITKE…DPTL), 773-794 (TKLH…WNQG), and 815-844 (AKTD…SVEP). Residues 580–594 (GTKTSRSSVETTPSV) show a composition bias toward polar residues. Over residues 605–620 (PAKHSSSTSSKGAKAS) the composition is skewed to low complexity. Basic and acidic residues predominate over residues 775–785 (LHPDVPTDKNL). A Glycyl lysine isopeptide (Lys-Gly) (interchain with G-Cter in SUMO2) cross-link involves residue Lys-786. A Glycyl lysine isopeptide (Lys-Gly) (interchain with G-Cter in SUMO2) cross-link involves residue Lys-872. Disordered regions lie at residues 1071–1187 (IAEQ…EDPH) and 1220–1328 (QQVS…KENQ). Basic and acidic residues predominate over residues 1076 to 1107 (ESERCEYSVGNKHRDPFEAPEDKDLPVEKYFV). Phosphoserine occurs at positions 1127 and 1139. Positions 1166–1175 (SKDDWPEREM) are enriched in basic and acidic residues. Positions 1238–1252 (TQATQPEAIPQGTNI) are enriched in polar residues. The span at 1253–1279 (TEEKPGRKRAEAKGNRSWSEESLKPSD) shows a compositional bias: basic and acidic residues. Lys-1256 participates in a covalent cross-link: Glycyl lysine isopeptide (Lys-Gly) (interchain with G-Cter in SUMO2). 3 positions are modified to phosphoserine: Ser-1290, Ser-1345, and Ser-1410. Residue Lys-1413 forms a Glycyl lysine isopeptide (Lys-Gly) (interchain with G-Cter in SUMO2) linkage. The span at 1430-1447 (QSTQLPCSSSPQETTQSR) shows a compositional bias: polar residues. The interval 1430–1451 (QSTQLPCSSSPQETTQSRPMPP) is disordered. 3 ANK repeats span residues 1462–1495 (AGET…HRDN), 1496–1525 (AGYC…DVNC), and 1529–1558 (DGTR…DPTL). The segment at 1634-1748 (SDVFEFEFSE…SSVEWLHPSD (115 aa)) is necessary and sufficient for interaction with PCGF1.

It belongs to the BCOR family. As to quaternary structure, interacts with BCL6; the interaction is direct. Forms ternary complexes with BCL6 and SMRT/NCOR2 on selected target genes promoters; potently repress expression. Can interact with HDAC1, HDAC3 and HDAC5. Interacts with PCGF1; the interaction is direct. Interacts with KDM2B. Component of an approximately 800 kDa repressive BCOR complex at least composed of BCOR, RYBP, PCGF1, RING1, RNF2/RING2, KDM2B and SKP1. Interacts with CPNE4 (via VWFA domain). Isoform 1 may interact with MLLT3/AF9. Ubiquitously expressed.

The protein resides in the nucleus. Its function is as follows. Transcriptional corepressor. May specifically inhibit gene expression when recruited to promoter regions by sequence-specific DNA-binding proteins such as BCL6 and MLLT3. This repression may be mediated at least in part by histone deacetylase activities which can associate with this corepressor. Involved in the repression of TFAP2A; impairs binding of BCL6 and KDM2B to TFAP2A promoter regions. Via repression of TFAP2A acts as a negative regulator of osteo-dentiogenic capacity in adult stem cells; the function implies inhibition of methylation on histone H3 'Lys-4' (H3K4me3) and 'Lys-36' (H3K36me2). This chain is BCL-6 corepressor (BCOR), found in Homo sapiens (Human).